The following is a 190-amino-acid chain: RNA pyrophosphohydrolase (190 aa).

A Nudix hydrolase domain is found at 6 to 149; sequence GYRPNVGIVL…KRGVYARALC (144 aa). Residues 38–59 carry the Nudix box motif; that stretch reads GGMHSDETPVEAMYRELNEEIG.

This sequence belongs to the Nudix hydrolase family. RppH subfamily. A divalent metal cation is required as a cofactor.

Functionally, accelerates the degradation of transcripts by removing pyrophosphate from the 5'-end of triphosphorylated RNA, leading to a more labile monophosphorylated state that can stimulate subsequent ribonuclease cleavage. The chain is RNA pyrophosphohydrolase from Xylella fastidiosa (strain M12).